The chain runs to 514 residues: DNA-(apurinic or apyrimidinic site) endonuclease 2 (514 aa).

Mg(2+) contacts are provided by N8 and E48. The active site involves Y156. Positions 197, 199, 303, and 304 each coordinate Mg(2+). The active-site Proton donor/acceptor is the D197. The active-site Proton acceptor is H304. The interval P359 to L417 is disordered. The segment covering H366–P381 has biased composition (basic residues). K371 is covalently cross-linked (Glycyl lysine isopeptide (Lys-Gly) (interchain with G-Cter in ubiquitin)). Polar residues predominate over residues S382–D410. Positions Q390–F397 are required for the interaction and colocalization with PCNA in nuclear foci in presence of oxidative-induced DNA damaging agents. Residues C465, H468, C491, and C505 each coordinate Zn(2+). Residues C465–S514 form a GRF-type zinc finger.

This sequence belongs to the DNA repair enzymes AP/ExoA family. In terms of assembly, interacts with PCNA; this interaction is triggered by reactive oxygen species and increased by misincorporation of uracil in nuclear DNA. It depends on Mg(2+) as a cofactor. Mn(2+) serves as cofactor. Ubiquitinated by the CUL9-RBX1 complex. Ubiquitinated by MKRN3 at Lys-371 leading to proteasomal degradation.

It localises to the nucleus. Its subcellular location is the cytoplasm. The protein localises to the mitochondrion. The enzyme catalyses Exonucleolytic cleavage in the 3'- to 5'-direction to yield nucleoside 5'-phosphates.. 3'-5' exonuclease activity is activated by sodium and manganese. 3'-5' exonuclease and 3'-phosphodiesterase activities are stimulated in presence of PCNA. Functionally, functions as a weak apurinic/apyrimidinic (AP) endodeoxyribonuclease in the DNA base excision repair (BER) pathway of DNA lesions induced by oxidative and alkylating agents. Initiates repair of AP sites in DNA by catalyzing hydrolytic incision of the phosphodiester backbone immediately adjacent to the damage, generating a single-strand break with 5'-deoxyribose phosphate and 3'-hydroxyl ends. Also displays double-stranded DNA 3'-5' exonuclease, 3'-phosphodiesterase activities. Shows robust 3'-5' exonuclease activity on 3'-recessed heteroduplex DNA and is able to remove mismatched nucleotides preferentially. Shows fairly strong 3'-phosphodiesterase activity involved in the removal of 3'-damaged termini formed in DNA by oxidative agents. In the nucleus functions in the PCNA-dependent BER pathway. Plays a role in reversing blocked 3' DNA ends, problematic lesions that preclude DNA synthesis. Required for somatic hypermutation (SHM) and DNA cleavage step of class switch recombination (CSR) of immunoglobulin genes. Required for proper cell cycle progression during proliferation of peripheral lymphocytes. This chain is DNA-(apurinic or apyrimidinic site) endonuclease 2 (APEX2), found in Bos taurus (Bovine).